A 121-amino-acid chain; its full sequence is Immunoglobulin heavy variable 6-1 (121 aa).

An N-terminal signal peptide occupies residues 1–20 (MSVSFLIFLPVLGLPWGVLS). Positions 21–45 (QVQLQQSGPGLVKPSQTLSLTCAIS) are framework-1. In terms of domain architecture, Ig-like spans 21-121 (QVQLQQSGPG…EDTAVYYCAR (101 aa)). A disulfide bridge connects residues Cys-42 and Cys-119. The complementarity-determining-1 stretch occupies residues 46–55 (GDSVSSNSAA). A framework-2 region spans residues 56–72 (WNWIRQSPSRGLEWLGR). The interval 73-81 (TYYRSKWYN) is complementarity-determining-2. Residues 82 to 119 (DYAVSVKSRITINPDTSKNQFSLQLNSVTPEDTAVYYC) are framework-3. Residues 120-121 (AR) form a complementarity-determining-3 region.

Immunoglobulins are composed of two identical heavy chains and two identical light chains; disulfide-linked.

The protein localises to the secreted. The protein resides in the cell membrane. Its function is as follows. V region of the variable domain of immunoglobulin heavy chains that participates in the antigen recognition. Immunoglobulins, also known as antibodies, are membrane-bound or secreted glycoproteins produced by B lymphocytes. In the recognition phase of humoral immunity, the membrane-bound immunoglobulins serve as receptors which, upon binding of a specific antigen, trigger the clonal expansion and differentiation of B lymphocytes into immunoglobulins-secreting plasma cells. Secreted immunoglobulins mediate the effector phase of humoral immunity, which results in the elimination of bound antigens. The antigen binding site is formed by the variable domain of one heavy chain, together with that of its associated light chain. Thus, each immunoglobulin has two antigen binding sites with remarkable affinity for a particular antigen. The variable domains are assembled by a process called V-(D)-J rearrangement and can then be subjected to somatic hypermutations which, after exposure to antigen and selection, allow affinity maturation for a particular antigen. The polypeptide is Immunoglobulin heavy variable 6-1 (Homo sapiens (Human)).